The primary structure comprises 351 residues: Methionine import ATP-binding protein MetN (351 aa).

An ABC transporter domain is found at 2–241 (IVTEALTKAF…PQHAVTRAFV (240 aa)). 38–45 (GRSGAGKS) contributes to the ATP binding site.

The protein belongs to the ABC transporter superfamily. Methionine importer (TC 3.A.1.24) family. As to quaternary structure, the complex is composed of two ATP-binding proteins (MetN), two transmembrane proteins (MetI) and a solute-binding protein (MetQ).

Its subcellular location is the cell inner membrane. The catalysed reaction is L-methionine(out) + ATP + H2O = L-methionine(in) + ADP + phosphate + H(+). It catalyses the reaction D-methionine(out) + ATP + H2O = D-methionine(in) + ADP + phosphate + H(+). Its function is as follows. Part of the ABC transporter complex MetNIQ involved in methionine import. Responsible for energy coupling to the transport system. This chain is Methionine import ATP-binding protein MetN, found in Rhodospirillum rubrum (strain ATCC 11170 / ATH 1.1.1 / DSM 467 / LMG 4362 / NCIMB 8255 / S1).